The sequence spans 120 residues: Small cysteine and glycine repeat-containing protein 2 (120 aa).

The interval 4 to 104 is 19 X 2 AA repeats of CG; the sequence is CGCGGCGGCG…TCHSCGCGCG (101 aa).

The protein belongs to the KRTAP type 28 family.

In the hair cortex, hair keratin intermediate filaments are embedded in an interfilamentous matrix, consisting of hair keratin-associated proteins (KRTAP), which are essential for the formation of a rigid and resistant hair shaft through their extensive disulfide bond cross-linking with abundant cysteine residues of hair keratins. The matrix proteins include the high-sulfur and high-glycine-tyrosine keratins. This is Small cysteine and glycine repeat-containing protein 2 from Homo sapiens (Human).